The sequence spans 273 residues: Shikimate dehydrogenase (NADP(+)) (273 aa).

Shikimate-binding positions include 14–16 (SKS) and T61. The active-site Proton acceptor is the K65. Shikimate-binding residues include N86 and D102. NADP(+) contacts are provided by residues 126–130 (GAGGA), 150–155 (NRTHAR), and M213. Y215 serves as a coordination point for shikimate. G237 is a binding site for NADP(+).

Belongs to the shikimate dehydrogenase family. As to quaternary structure, homodimer.

The catalysed reaction is shikimate + NADP(+) = 3-dehydroshikimate + NADPH + H(+). The protein operates within metabolic intermediate biosynthesis; chorismate biosynthesis; chorismate from D-erythrose 4-phosphate and phosphoenolpyruvate: step 4/7. Functionally, involved in the biosynthesis of the chorismate, which leads to the biosynthesis of aromatic amino acids. Catalyzes the reversible NADPH linked reduction of 3-dehydroshikimate (DHSA) to yield shikimate (SA). This is Shikimate dehydrogenase (NADP(+)) from Aeromonas hydrophila subsp. hydrophila (strain ATCC 7966 / DSM 30187 / BCRC 13018 / CCUG 14551 / JCM 1027 / KCTC 2358 / NCIMB 9240 / NCTC 8049).